The chain runs to 65 residues: Putative antitoxin MJECL31 (65 aa).

This sequence belongs to the UPF0165 family.

Possibly the antitoxin component of a type II toxin-antitoxin (TA) system. This chain is Putative antitoxin MJECL31, found in Methanocaldococcus jannaschii (strain ATCC 43067 / DSM 2661 / JAL-1 / JCM 10045 / NBRC 100440) (Methanococcus jannaschii).